The chain runs to 668 residues: CLK4-associating serine/arginine rich protein (668 aa).

At Ser101 the chain carries Phosphoserine. Disordered stretches follow at residues 173–232 and 252–668; these read AEVE…GMAD and AKAL…HYRH. Residues 182–214 are compositionally biased toward acidic residues; the sequence is PEEEESPAEEESNSDEDEVIPDIDVEVDVDELN. Residues 265–283 are compositionally biased toward basic residues; sequence RRSRRQRREFREKRLRGRK. Ser285 and Ser294 each carry phosphoserine. Residues 290–313 are compositionally biased toward basic and acidic residues; that stretch reads ARRDSPTYDPYKRSPSESSSESRS. Phosphothreonine is present on Thr327. Residues Ser331 and Ser335 each carry the phosphoserine modification. Low complexity-rich tracts occupy residues 340–353 and 378–395; these read AAAA…GAAP and SSSS…SRSS. Over residues 396–435 the composition is skewed to basic residues; sequence SRSRRGYYRSGRHARSRSRSWSRSRSRSRRYSRSRSRGRR. Basic and acidic residues predominate over residues 436 to 446; it reads HSDGGSRDGHR. Residues 475 to 486 show a composition bias toward basic residues; that stretch reads RGARGPRHHSSS. Low complexity-rich tracts occupy residues 487 to 510 and 518 to 527; these read HSRS…SRSQ and QSHSQSQSHS. Residue Ser541 is modified to Phosphoserine. At Thr567 the chain carries Phosphothreonine. Residues 579 to 641 are a coiled coil; the sequence is ALNRQFKADK…ERQYSRQSRS (63 aa). Basic and acidic residues-rich tracts occupy residues 584 to 611 and 619 to 635; these read FKAD…ELRA and KERE…ERQY. Low complexity predominate over residues 636–645; sequence SRQSRSPSPR. Residues 653 to 668 are compositionally biased toward basic residues; that stretch reads SRRRSRSRSRSPHYRH.

It belongs to the splicing factor SR family. In terms of assembly, probably interacts with CLK4. Post-translationally, phosphorylated in vitro by CLK4. As to expression, highly expressed in brain. Expressed at intermediate level in lung and liver. In brain, it is expressed in the hippocampus, cerebellum and olfactory bulb.

It is found in the nucleus. The protein resides in the nucleoplasm. Its function is as follows. Probably functions as an alternative splicing regulator. May regulate the mRNA splicing of genes such as CLK1. May act by regulating members of the CLK kinase family. The polypeptide is CLK4-associating serine/arginine rich protein (Clasrp) (Mus musculus (Mouse)).